The primary structure comprises 120 residues: Large ribosomal subunit protein bL19 (120 aa).

This sequence belongs to the bacterial ribosomal protein bL19 family.

This protein is located at the 30S-50S ribosomal subunit interface and may play a role in the structure and function of the aminoacyl-tRNA binding site. This is Large ribosomal subunit protein bL19 (rplS) from Nostoc sp. (strain PCC 7120 / SAG 25.82 / UTEX 2576).